Here is an 823-residue protein sequence, read N- to C-terminus: ATM interactor (823 aa).

The tract at residues 28 to 67 (GAAAAASGPWVPPGPRLRGSRPRPAGATQQPAVPAPPAGE) is disordered. Low complexity predominate over residues 49-59 (PRPAGATQQPA). The C2H2-type 1 zinc finger occupies 84 to 109 (ILCTVRGCGKILPNSPALNMHLVKSH). The C2H2-type 2; degenerate zinc-finger motif lies at 165–184 (HKCSKCSNSYGTEWDLKRHA). Over residues 214–225 (HEIPAEHRDPPS) the composition is skewed to basic and acidic residues. Disordered regions lie at residues 214–234 (HEIPAEHRDPPSKKRKMENCA), 268–289 (EPSFEDSCGSNTDKQTLTTPPR), and 610–634 (RSLLSDTNPGPDTQLPSGPAQNPGI). Residues 223-442 (PPSKKRKMEN…ADSSVSSCSQ (220 aa)) are required for formation of RAD51 foci. Polar residues-rich tracts occupy residues 275-286 (CGSNTDKQTLTT) and 613-629 (LSDTNPGPDTQLPSGPA).

Interacts via its C-terminus with ATM. Interacts with DYNLL1; this interaction inhibits ATMIN transcriptional activity and hence may play a role in a feedback loop whereby DYNLL1 inhibits transactivation of its own promoter by ATMIN. In terms of tissue distribution, ubiquitously expressed in normal tissues and cancer cell lines with highest levels in placenta and skeletal muscle.

It is found in the nucleus. Its function is as follows. Transcription factor. Plays a crucial role in cell survival and RAD51 foci formation in response to methylating DNA damage. Involved in regulating the activity of ATM in the absence of DNA damage. May play a role in stabilizing ATM. Binds to the DYNLL1 promoter and activates its transcription. The sequence is that of ATM interactor (ATMIN) from Homo sapiens (Human).